A 341-amino-acid polypeptide reads, in one-letter code: Probable membrane-associated kinase regulator 1 (341 aa).

5 disordered regions span residues 1–29 (MRRQ…FEFN), 67–122 (TLGS…SSRP), 158–185 (PKTN…KRMS), 206–230 (LSPK…NNIR), and 288–310 (RGGF…SVSS). Composition is skewed to low complexity over residues 12–29 (PPQS…FEFN), 67–108 (TLGS…SFPL), and 167–180 (SSSS…APSS). Residues 208–230 (PKQSSNIKTESSSSLKDSGNNIR) show a composition bias toward polar residues. Residues 297–310 (SCSSSSSNNNSVSS) show a composition bias toward low complexity.

A C-terminus-derived peptide binds BRI1 in vitro.

It localises to the cell membrane. Functionally, may negatively regulate brassinosteroid signaling. The polypeptide is Probable membrane-associated kinase regulator 1 (MAKR1) (Arabidopsis thaliana (Mouse-ear cress)).